A 124-amino-acid chain; its full sequence is Small ribosomal subunit protein eS25 (124 aa).

Over residues 1–22 the composition is skewed to basic and acidic residues; that stretch reads MPPKDSKQKKDTSKAKKDKDPV. Residues 1–37 are disordered; that stretch reads MPPKDSKQKKDTSKAKKDKDPVNKSGGKAKKKKWSKG. The segment covering 27–37 has biased composition (basic residues); the sequence is GKAKKKKWSKG.

The protein belongs to the eukaryotic ribosomal protein eS25 family. As to quaternary structure, component of the small ribosomal subunit.

It is found in the cytoplasm. Its function is as follows. Component of the small ribosomal subunit. The ribosome is a large ribonucleoprotein complex responsible for the synthesis of proteins in the cell. This chain is Small ribosomal subunit protein eS25 (rps25), found in Ictalurus punctatus (Channel catfish).